An 887-amino-acid polypeptide reads, in one-letter code: Alanine--tRNA ligase (887 aa).

Residues His-581, His-585, Cys-683, and His-687 each contribute to the Zn(2+) site.

This sequence belongs to the class-II aminoacyl-tRNA synthetase family. It depends on Zn(2+) as a cofactor.

The protein resides in the cytoplasm. It carries out the reaction tRNA(Ala) + L-alanine + ATP = L-alanyl-tRNA(Ala) + AMP + diphosphate. In terms of biological role, catalyzes the attachment of alanine to tRNA(Ala) in a two-step reaction: alanine is first activated by ATP to form Ala-AMP and then transferred to the acceptor end of tRNA(Ala). Also edits incorrectly charged Ser-tRNA(Ala) and Gly-tRNA(Ala) via its editing domain. The polypeptide is Alanine--tRNA ligase (Ehrlichia ruminantium (strain Welgevonden)).